A 681-amino-acid polypeptide reads, in one-letter code: Sodium-dependent phosphate transporter 1 (681 aa).

Helical transmembrane passes span 25 to 45, 66 to 86, 106 to 126, 162 to 182, 201 to 221, and 234 to 254; these read NLWMLILGFIIAFVLAFSVGA, ACILASIFETVGSALLGAKVS, LMAGSVSAMFGSAVWQLVASF, IVMSWFVSPLLSGIMSGILFF, ALPIFYACTIGINLFSIMYTG, and GTILISVGCAVFCALIVWFFV. Positions 266-295 are disordered; sequence VKSSPSESPLMEKKNNLKDHEETKMAPGDV. Serine 269 and serine 273 each carry phosphoserine. The segment covering 275–289 has biased composition (basic and acidic residues); sequence LMEKKNNLKDHEETK. A run of 4 helical transmembrane segments spans residues 513–533, 561–581, 602–622, and 652–672; these read VSLLFQFLQILTACFGSFAHG, ATPIWLLLYGGVGICMGLWVW, FSIELASAFTVVVASNIGLPI, and IFMAWFVTVPISGVISAAIMA.

The protein belongs to the inorganic phosphate transporter (PiT) (TC 2.A.20) family. In terms of tissue distribution, ubiquitously expressed.

It is found in the cell membrane. It carries out the reaction 2 Na(+)(out) + phosphate(out) = 2 Na(+)(in) + phosphate(in). Functionally, sodium-phosphate symporter which preferentially transports the monovalent form of phosphate with a stoichiometry of two sodium ions per phosphate ion. May play a role in extracellular matrix and cartilage calcification as well as in vascular calcification. Essential for cell proliferation but this function is independent of its phosphate transporter activity. In Rattus norvegicus (Rat), this protein is Sodium-dependent phosphate transporter 1 (Slc20a1).